The sequence spans 245 residues: 1-(5-phosphoribosyl)-5-[(5-phosphoribosylamino)methylideneamino] imidazole-4-carboxamide isomerase (245 aa).

The active-site Proton acceptor is the D7. Residue D129 is the Proton donor of the active site.

Belongs to the HisA/HisF family.

It localises to the cytoplasm. The enzyme catalyses 1-(5-phospho-beta-D-ribosyl)-5-[(5-phospho-beta-D-ribosylamino)methylideneamino]imidazole-4-carboxamide = 5-[(5-phospho-1-deoxy-D-ribulos-1-ylimino)methylamino]-1-(5-phospho-beta-D-ribosyl)imidazole-4-carboxamide. Its pathway is amino-acid biosynthesis; L-histidine biosynthesis; L-histidine from 5-phospho-alpha-D-ribose 1-diphosphate: step 4/9. This chain is 1-(5-phosphoribosyl)-5-[(5-phosphoribosylamino)methylideneamino] imidazole-4-carboxamide isomerase, found in Escherichia coli O7:K1 (strain IAI39 / ExPEC).